The primary structure comprises 184 residues: NADH-quinone oxidoreductase subunit B (184 aa).

Residues Cys37, Cys38, Cys103, and Cys132 each contribute to the [4Fe-4S] cluster site.

It belongs to the complex I 20 kDa subunit family. In terms of assembly, NDH-1 is composed of 14 different subunits. Subunits NuoB, C, D, E, F, and G constitute the peripheral sector of the complex. The cofactor is [4Fe-4S] cluster.

The protein localises to the cell membrane. The enzyme catalyses a quinone + NADH + 5 H(+)(in) = a quinol + NAD(+) + 4 H(+)(out). In terms of biological role, NDH-1 shuttles electrons from NADH, via FMN and iron-sulfur (Fe-S) centers, to quinones in the respiratory chain. The immediate electron acceptor for the enzyme in this species is believed to be a menaquinone. Couples the redox reaction to proton translocation (for every two electrons transferred, four hydrogen ions are translocated across the cytoplasmic membrane), and thus conserves the redox energy in a proton gradient. This Rhodococcus jostii (strain RHA1) protein is NADH-quinone oxidoreductase subunit B.